A 225-amino-acid chain; its full sequence is Ribonuclease 3 (225 aa).

Residues 5–127 (IDKLERKLGY…IIGAIYLDSD (123 aa)) enclose the RNase III domain. Residue Glu-40 coordinates Mg(2+). Residue Asp-44 is part of the active site. Residues Asp-113 and Glu-116 each contribute to the Mg(2+) site. Glu-116 is an active-site residue. The DRBM domain maps to 154-224 (DPKTRLQEFL…AETALEQLTN (71 aa)). The segment at 204–225 (GTSRRKAEQAAAETALEQLTNG) is disordered. Residues 212 to 225 (QAAAETALEQLTNG) are compositionally biased toward low complexity.

It belongs to the ribonuclease III family. Homodimer. The cofactor is Mg(2+).

The protein localises to the cytoplasm. The enzyme catalyses Endonucleolytic cleavage to 5'-phosphomonoester.. Functionally, digests double-stranded RNA. Involved in the processing of primary rRNA transcript to yield the immediate precursors to the large and small rRNAs (23S and 16S). Processes some mRNAs, and tRNAs when they are encoded in the rRNA operon. Processes pre-crRNA and tracrRNA of type II CRISPR loci if present in the organism. The sequence is that of Ribonuclease 3 from Vibrio parahaemolyticus serotype O3:K6 (strain RIMD 2210633).